Here is a 318-residue protein sequence, read N- to C-terminus: NADH-ubiquinone oxidoreductase chain 1 (318 aa).

Helical transmembrane passes span 2–22 (FTIN…FLTL), 70–90 (MFII…VPLP), 100–120 (LGVL…LWSG), 146–166 (LAII…STLI), 171–191 (HLWL…STLA), 222–242 (LFFM…TILF), 253–273 (ELYT…FLWI), and 294–314 (LPLT…MSSI).

This sequence belongs to the complex I subunit 1 family.

The protein resides in the mitochondrion inner membrane. The catalysed reaction is a ubiquinone + NADH + 5 H(+)(in) = a ubiquinol + NAD(+) + 4 H(+)(out). Core subunit of the mitochondrial membrane respiratory chain NADH dehydrogenase (Complex I) that is believed to belong to the minimal assembly required for catalysis. Complex I functions in the transfer of electrons from NADH to the respiratory chain. The immediate electron acceptor for the enzyme is believed to be ubiquinone. The polypeptide is NADH-ubiquinone oxidoreductase chain 1 (MT-ND1) (Rhinoceros unicornis (Greater Indian rhinoceros)).